The following is a 77-amino-acid chain: Dermatoxin-B1 (77 aa).

A signal peptide spans 1–22; it reads MAFLKKSLFLVLFLGLVPLSLC. The propeptide occupies 23 to 42; the sequence is ESEKREGENEEEQEDDQSEE. Residues 24–45 are disordered; sequence SEKREGENEEEQEDDQSEEKRS. Residues 30-40 show a composition bias toward acidic residues; it reads ENEEEQEDDQS. Q76 is subject to Glutamine amide.

Belongs to the frog skin active peptide (FSAP) family. Dermatoxin subfamily. In terms of tissue distribution, highest expression in skin and to a lesser extent in brain and intestine.

The protein localises to the secreted. Its subcellular location is the target cell membrane. Possesses a potent antimicrobial activity against Gram-positive bacteria B.megaterium, C.glutamicum and S.aureus and mollicutes A.laidlawii and S.melliferum. Less active against Gram-negative bacteria B.cepacia, P.aeruginosa, S.typhimurium and S.meliloti. Probably acts by disturbing membrane functions with its amphipathic structure. This chain is Dermatoxin-B1, found in Phyllomedusa bicolor (Two-colored leaf frog).